A 158-amino-acid polypeptide reads, in one-letter code: 2-C-methyl-D-erythritol 2,4-cyclodiphosphate synthase (158 aa).

The a divalent metal cation site is built by Asp9 and His11. Residues 9-11 (DVH) and 35-36 (HS) contribute to the 4-CDP-2-C-methyl-D-erythritol 2-phosphate site. His43 provides a ligand contact to a divalent metal cation. 4-CDP-2-C-methyl-D-erythritol 2-phosphate-binding positions include 57–59 (DIG), 62–66 (FPDTD), 101–107 (AQKPKMA), 133–136 (TTTE), Phe140, and Arg143.

It belongs to the IspF family. In terms of assembly, homotrimer. The cofactor is a divalent metal cation.

It carries out the reaction 4-CDP-2-C-methyl-D-erythritol 2-phosphate = 2-C-methyl-D-erythritol 2,4-cyclic diphosphate + CMP. It participates in isoprenoid biosynthesis; isopentenyl diphosphate biosynthesis via DXP pathway; isopentenyl diphosphate from 1-deoxy-D-xylulose 5-phosphate: step 4/6. Functionally, involved in the biosynthesis of isopentenyl diphosphate (IPP) and dimethylallyl diphosphate (DMAPP), two major building blocks of isoprenoid compounds. Catalyzes the conversion of 4-diphosphocytidyl-2-C-methyl-D-erythritol 2-phosphate (CDP-ME2P) to 2-C-methyl-D-erythritol 2,4-cyclodiphosphate (ME-CPP) with a corresponding release of cytidine 5-monophosphate (CMP). The chain is 2-C-methyl-D-erythritol 2,4-cyclodiphosphate synthase from Bacillus thuringiensis subsp. konkukian (strain 97-27).